Consider the following 126-residue polypeptide: Histone H2B.5 (126 aa).

Basic and acidic residues predominate over residues 1–27 (MAPKAEKKPSEKAPKADKKITKEGGSE). The segment at 1-34 (MAPKAEKKPSEKAPKADKKITKEGGSERKKKTKK) is disordered. Ala-2 bears the N,N,N-trimethylalanine; alternate mark. Ala-2 carries the n,N-dimethylalanine; alternate modification. An N-methylalanine; alternate modification is found at Ala-2. Lys-4 bears the N6-methyllysine mark. Lys-7, Lys-12, Lys-18, and Lys-19 each carry N6-acetyllysine. Lys-122 participates in a covalent cross-link: Glycyl lysine isopeptide (Lys-Gly) (interchain with G-Cter in ubiquitin).

The protein belongs to the histone H2B family. The nucleosome is a histone octamer containing two molecules each of H2A, H2B, H3 and H4 assembled in one H3-H4 heterotetramer and two H2A-H2B heterodimers. The octamer wraps approximately 147 bp of DNA. In terms of processing, can be acetylated to form H2BK6ac, H2BK33ac and H2BK34ac. Post-translationally, monoubiquitinated by BRE1 to form H2BK143ub1 and deubiquitinated by UBP26. Required for heterochromatic histone H3 di- and trimethylation at H3K4me. May give a specific tag for epigenetic transcriptional activation.

It is found in the nucleus. Its subcellular location is the chromosome. Functionally, core component of nucleosome. Nucleosomes wrap and compact DNA into chromatin, limiting DNA accessibility to the cellular machineries which require DNA as a template. Histones thereby play a central role in transcription regulation, DNA repair, DNA replication and chromosomal stability. DNA accessibility is regulated via a complex set of post-translational modifications of histones, also called histone code, and nucleosome remodeling. The chain is Histone H2B.5 from Arabidopsis thaliana (Mouse-ear cress).